The following is a 559-amino-acid chain: Nicotinate phosphoribosyltransferase 1 (559 aa).

Nicotinate-binding residues include tyrosine 33 and threonine 221. Histidine 224 carries the phosphohistidine modification. Arginine 331 is a nicotinate binding site. A 5-phospho-alpha-D-ribose 1-diphosphate-binding site is contributed by threonine 393.

This sequence belongs to the NAPRTase family. Requires Mg(2+) as cofactor. The cofactor is Mn(2+). Post-translationally, transiently phosphorylated on a His residue during the reaction cycle. Phosphorylation strongly increases the affinity for substrates and increases the rate of nicotinate D-ribonucleotide production. Dephosphorylation regenerates the low-affinity form of the enzyme, leading to product release.

It carries out the reaction nicotinate + 5-phospho-alpha-D-ribose 1-diphosphate + ATP + H2O = nicotinate beta-D-ribonucleotide + ADP + phosphate + diphosphate. Its pathway is cofactor biosynthesis; NAD(+) biosynthesis; nicotinate D-ribonucleotide from nicotinate: step 1/1. Functionally, catalyzes the first step in the biosynthesis of NAD from nicotinic acid, the ATP-dependent synthesis of beta-nicotinate D-ribonucleotide from nicotinate and 5-phospho-D-ribose 1-phosphate. Helps prevent cellular oxidative stress via its role in NAD biosynthesis. This is Nicotinate phosphoribosyltransferase 1 from Arabidopsis thaliana (Mouse-ear cress).